The primary structure comprises 255 residues: Putative cysteine-rich repeat secretory protein 27 (255 aa).

The N-terminal stretch at 1–26 is a signal peptide; the sequence is MISKFGSVHILAVVAIQLLIIPSVSS. Gnk2-homologous domains lie at 33–135 and 141–252; these read YLHH…TINS and YEND…LYPF.

Belongs to the cysteine-rich repeat secretory protein family.

The protein resides in the secreted. The sequence is that of Putative cysteine-rich repeat secretory protein 27 (CRRSP27) from Arabidopsis thaliana (Mouse-ear cress).